Consider the following 73-residue polypeptide: UPF0352 protein APJL_0577 (73 aa).

This sequence belongs to the UPF0352 family.

This Actinobacillus pleuropneumoniae serotype 3 (strain JL03) protein is UPF0352 protein APJL_0577.